Reading from the N-terminus, the 465-residue chain is Glutamate--tRNA ligase (465 aa).

A 'HIGH' region motif is present at residues 10-20 (PSPTGQLHIGG). 4 residues coordinate Zn(2+): cysteine 99, cysteine 101, cysteine 126, and glutamate 128. Residues 236–240 (KLSKR) carry the 'KMSKS' region motif. Residue lysine 239 participates in ATP binding.

It belongs to the class-I aminoacyl-tRNA synthetase family. Glutamate--tRNA ligase type 1 subfamily. As to quaternary structure, monomer. Zn(2+) is required as a cofactor.

The protein resides in the cytoplasm. The catalysed reaction is tRNA(Glu) + L-glutamate + ATP = L-glutamyl-tRNA(Glu) + AMP + diphosphate. Catalyzes the attachment of glutamate to tRNA(Glu) in a two-step reaction: glutamate is first activated by ATP to form Glu-AMP and then transferred to the acceptor end of tRNA(Glu). This is Glutamate--tRNA ligase from Lawsonia intracellularis (strain PHE/MN1-00).